The primary structure comprises 360 residues: Probable cinnamyl alcohol dehydrogenase 6 (360 aa).

Cysteine 48 serves as a coordination point for Zn(2+). Threonine 50 lines the NADP(+) pocket. Zn(2+) contacts are provided by histidine 70, glutamate 71, cysteine 101, cysteine 104, cysteine 107, cysteine 115, and cysteine 164. NADP(+) contacts are provided by residues threonine 168, 192–197 (GLGGLG), 215–220 (STSPAK), threonine 255, glycine 279, and 302–304 (SMT).

The protein belongs to the zinc-containing alcohol dehydrogenase family. Homodimer. Requires Zn(2+) as cofactor.

The enzyme catalyses (E)-cinnamyl alcohol + NADP(+) = (E)-cinnamaldehyde + NADPH + H(+). The catalysed reaction is (E)-coniferol + NADP(+) = (E)-coniferaldehyde + NADPH + H(+). It catalyses the reaction (E)-sinapyl alcohol + NADP(+) = (E)-sinapaldehyde + NADPH + H(+). It carries out the reaction (E)-4-coumaroyl alcohol + NADP(+) = (E)-4-coumaraldehyde + NADPH + H(+). The enzyme catalyses (E)-caffeyl alcohol + NADP(+) = (E)-caffeyl aldehyde + NADPH + H(+). It functions in the pathway aromatic compound metabolism; phenylpropanoid biosynthesis. Involved in lignin biosynthesis. Catalyzes the final step specific for the production of lignin monomers. Catalyzes the NADPH-dependent reduction of coniferaldehyde, 5-hydroxyconiferaldehyde, sinapaldehyde, 4-coumaraldehyde and caffeyl aldehyde to their respective alcohols. The polypeptide is Probable cinnamyl alcohol dehydrogenase 6 (Oryza sativa subsp. japonica (Rice)).